A 501-amino-acid polypeptide reads, in one-letter code: ATP synthase subunit alpha (501 aa).

169–176 contacts ATP; it reads GDRQTGKT.

Belongs to the ATPase alpha/beta chains family. As to quaternary structure, F-type ATPases have 2 components, CF(1) - the catalytic core - and CF(0) - the membrane proton channel. CF(1) has five subunits: alpha(3), beta(3), gamma(1), delta(1), epsilon(1). CF(0) has three main subunits: a(1), b(2) and c(9-12). The alpha and beta chains form an alternating ring which encloses part of the gamma chain. CF(1) is attached to CF(0) by a central stalk formed by the gamma and epsilon chains, while a peripheral stalk is formed by the delta and b chains.

It localises to the cell membrane. The catalysed reaction is ATP + H2O + 4 H(+)(in) = ADP + phosphate + 5 H(+)(out). Its function is as follows. Produces ATP from ADP in the presence of a proton gradient across the membrane. The alpha chain is a regulatory subunit. The sequence is that of ATP synthase subunit alpha from Streptococcus equi subsp. zooepidemicus (strain H70).